Here is a 182-residue protein sequence, read N- to C-terminus: ATP synthase subunit delta (182 aa).

This sequence belongs to the ATPase delta chain family. As to quaternary structure, F-type ATPases have 2 components, F(1) - the catalytic core - and F(0) - the membrane proton channel. F(1) has five subunits: alpha(3), beta(3), gamma(1), delta(1), epsilon(1). CF(0) has four main subunits: a(1), b(1), b'(1) and c(10-14). The alpha and beta chains form an alternating ring which encloses part of the gamma chain. F(1) is attached to F(0) by a central stalk formed by the gamma and epsilon chains, while a peripheral stalk is formed by the delta, b and b' chains.

It is found in the cellular thylakoid membrane. In terms of biological role, f(1)F(0) ATP synthase produces ATP from ADP in the presence of a proton or sodium gradient. F-type ATPases consist of two structural domains, F(1) containing the extramembraneous catalytic core and F(0) containing the membrane proton channel, linked together by a central stalk and a peripheral stalk. During catalysis, ATP synthesis in the catalytic domain of F(1) is coupled via a rotary mechanism of the central stalk subunits to proton translocation. Its function is as follows. This protein is part of the stalk that links CF(0) to CF(1). It either transmits conformational changes from CF(0) to CF(1) or is implicated in proton conduction. The chain is ATP synthase subunit delta from Synechococcus sp. (strain WH7803).